Consider the following 143-residue polypeptide: Class II hydrophobin qid3 (143 aa).

The N-terminal stretch at 1–17 is a signal peptide; the sequence is MKFLTVAAVFFTAVLAA. Residues 20–37 show a composition bias toward pro residues; that stretch reads NYPPPPPPTYAPPPPTYT. The disordered stretch occupies residues 20–67; the sequence is NYPPPPPPTYAPPPPTYTLPPNGNGGGNGNGNGNGNGGGNGNGNGNTN. 10 repeat units span residues 41 to 42, 43 to 44, 47 to 48, 49 to 50, 51 to 52, 53 to 54, 55 to 56, 59 to 60, 61 to 62, and 63 to 64. A 10 X 2 AA repeats of N-G region spans residues 41-64; that stretch reads NGNGGGNGNGNGNGNGGGNGNGNG. Over residues 42–63 the composition is skewed to gly residues; that stretch reads GNGGGNGNGNGNGNGGGNGNGN. Disulfide bonds link Cys-74-Cys-124, Cys-85-Cys-97, and Cys-125-Cys-136.

It belongs to the cerato-ulmin hydrophobin family. As to quaternary structure, homotetramer. Further self-assembles to form highly ordered films at water-air interfaces through intermolecular interactions.

The protein resides in the secreted. It is found in the cell wall. Its function is as follows. Aerial growth, conidiation, and dispersal of filamentous fungi in the environment rely upon a capability of their secreting small amphipathic proteins called hydrophobins (HPBs) with low sequence identity. Class I can self-assemble into an outermost layer of rodlet bundles on aerial cell surfaces, conferring cellular hydrophobicity that supports fungal growth, development and dispersal; whereas Class II form highly ordered films at water-air interfaces through intermolecular interactions but contribute nothing to the rodlet structure. Qid3 is a class II hydrophobin that might acts as a chitinase inhibitor at the cell surface that blocks the degradation of the chitin rings localized in the budding region of dividing cells. The chain is Class II hydrophobin qid3 from Trichoderma harzianum (Hypocrea lixii).